A 114-amino-acid chain; its full sequence is Replication initiation control protein YabA (114 aa).

Residues H84, C86, C102, and C105 each contribute to the Zn(2+) site.

This sequence belongs to the YabA family. As to quaternary structure, homotetramer. Interacts with both DnaA and DnaN, acting as a bridge between these two proteins. Requires Zn(2+) as cofactor.

The protein localises to the cytoplasm. The protein resides in the nucleoid. In terms of biological role, involved in control of chromosome replication initiation. Inhibits the cooperative binding of DnaA to the oriC region, thus negatively regulating initiation of chromosome replication. Inhibits the ability of DnaA-ATP to form a helix on DNA; does not disassemble preformed DnaA-DNA helices. Decreases the residence time of DnaA on the chromosome at its binding sites (oriC, replication forks and promoter-binding sites). Tethers DnaA to the replication machinery via the DNA polymerase beta sliding clamp subunit (dnaN). Associates with oriC and other DnaA targets on the chromosome in a DnaA-dependent manner. This is Replication initiation control protein YabA from Ligilactobacillus salivarius (strain UCC118) (Lactobacillus salivarius).